A 221-amino-acid polypeptide reads, in one-letter code: GTP cyclohydrolase III (221 aa).

This sequence belongs to the archaeal-type GTP cyclohydrolase family.

It catalyses the reaction GTP + 3 H2O = 2-amino-5-formylamino-6-(5-phospho-D-ribosylamino)pyrimidin-4(3H)-one + 2 phosphate + 2 H(+). In terms of biological role, catalyzes the formation of 2-amino-5-formylamino-6-ribofuranosylamino-4(3H)-pyrimidinone ribonucleotide monophosphate and inorganic phosphate from GTP. Also has an independent pyrophosphate phosphohydrolase activity. This is GTP cyclohydrolase III from Pyrobaculum islandicum (strain DSM 4184 / JCM 9189 / GEO3).